The primary structure comprises 283 residues: Pantothenate synthetase (283 aa).

M31–H38 contacts ATP. The Proton donor role is filled by H38. Q62 lines the (R)-pantoate pocket. Q62 serves as a coordination point for beta-alanine. G148–D151 is an ATP binding site. Q154 serves as a coordination point for (R)-pantoate. Residues V177 and R185 to R188 each bind ATP.

The protein belongs to the pantothenate synthetase family. Homodimer.

It localises to the cytoplasm. It catalyses the reaction (R)-pantoate + beta-alanine + ATP = (R)-pantothenate + AMP + diphosphate + H(+). The protein operates within cofactor biosynthesis; (R)-pantothenate biosynthesis; (R)-pantothenate from (R)-pantoate and beta-alanine: step 1/1. Its function is as follows. Catalyzes the condensation of pantoate with beta-alanine in an ATP-dependent reaction via a pantoyl-adenylate intermediate. The chain is Pantothenate synthetase from Staphylococcus haemolyticus (strain JCSC1435).